The chain runs to 265 residues: tRNA (guanine-N(1)-)-methyltransferase (265 aa).

Residues G110 and 129–134 (LGDFVM) each bind S-adenosyl-L-methionine. Positions 243–265 (LAAWGAPPPPLPKRRRGAKPNPN) are disordered. Positions 254-265 (PKRRRGAKPNPN) are enriched in basic residues.

The protein belongs to the RNA methyltransferase TrmD family. As to quaternary structure, homodimer.

Its subcellular location is the cytoplasm. It carries out the reaction guanosine(37) in tRNA + S-adenosyl-L-methionine = N(1)-methylguanosine(37) in tRNA + S-adenosyl-L-homocysteine + H(+). Specifically methylates guanosine-37 in various tRNAs. The sequence is that of tRNA (guanine-N(1)-)-methyltransferase from Deinococcus geothermalis (strain DSM 11300 / CIP 105573 / AG-3a).